Reading from the N-terminus, the 184-residue chain is UPF0301 protein SPO0296 (184 aa).

It belongs to the UPF0301 (AlgH) family.

In Ruegeria pomeroyi (strain ATCC 700808 / DSM 15171 / DSS-3) (Silicibacter pomeroyi), this protein is UPF0301 protein SPO0296.